A 34-amino-acid chain; its full sequence is Conotoxin S4.3 (34 aa).

The residue at position 1 (Q1) is a Pyrrolidone carboxylic acid. Position 3 is a 4-carboxyglutamate (E3). O-linked (HexNAc...) serine glycosylation occurs at S7. T9 is a glycosylation site (O-linked (HexNAc...) threonine). 4-hydroxyproline is present on residues P17, P22, P31, and P32.

It belongs to the conotoxin A superfamily. Contains 3 disulfide bonds. In terms of tissue distribution, expressed by the venom duct.

It localises to the secreted. Functionally, probable neurotoxin with ion channel inhibitor activity. The sequence is that of Conotoxin S4.3 from Conus striatus (Striated cone).